The chain runs to 62 residues: Beta-defensin 33 (62 aa).

A signal peptide spans 1-20 (MRLLFLLFLLLVCLAQKTSG). Cystine bridges form between Cys-30-Cys-59, Cys-37-Cys-52, and Cys-45-Cys-60.

This sequence belongs to the beta-defensin family.

It localises to the secreted. Functionally, has antibacterial activity. The polypeptide is Beta-defensin 33 (Defb33) (Rattus norvegicus (Rat)).